The sequence spans 250 residues: Protein lin-28 homolog B (250 aa).

2 disordered regions span residues 1-27 and 98-126; these read MAEA…ESPL and RVTG…KPKG. Residues 9–18 are compositionally biased toward basic and acidic residues; it reads GGEEPGRLPE. One can recognise a CSD domain in the interval 29–102; sequence HGAGHCKWFN…GLESIRVTGP (74 aa). Residues 114–125 show a composition bias toward basic residues; that stretch reads PKGKTVQKRKPK. 2 consecutive CCHC-type zinc fingers follow at residues 127–144 and 149–166; these read DRCY…ECSL and KKCH…NCPH. 8 residues coordinate Zn(2+): Cys129, Cys132, His137, Cys142, Cys151, Cys154, His159, and Cys164. Residues 165–250 form a disordered region; the sequence is PHKTVSQQPT…GPSVQKRKKT (86 aa). Over residues 168-177 the composition is skewed to polar residues; that stretch reads TVSQQPTSSQ. The span at 200–209 shows a compositional bias: low complexity; the sequence is GYSSPSYSQE. Residues 210–219 show a composition bias toward basic and acidic residues; the sequence is GRSEISERSG.

It belongs to the lin-28 family.

The protein resides in the nucleus. Its subcellular location is the nucleolus. Its function is as follows. Suppressor of specific microRNA (miRNA) biogenesis. Binds target primary miRNA transcripts and sequester them in the nucleolus, away from the microprocessor complex, hence preventing their processing into mature miRNA. The specific interaction with target pri-miRNAs occurs via an 5'-GGAG-3' motif in the pre-miRNA terminal loop. This is Protein lin-28 homolog B (LIN28B) from Gallus gallus (Chicken).